The sequence spans 416 residues: Gamma-glutamyl phosphate reductase (416 aa).

This sequence belongs to the gamma-glutamyl phosphate reductase family.

The protein localises to the cytoplasm. The enzyme catalyses L-glutamate 5-semialdehyde + phosphate + NADP(+) = L-glutamyl 5-phosphate + NADPH + H(+). It functions in the pathway amino-acid biosynthesis; L-proline biosynthesis; L-glutamate 5-semialdehyde from L-glutamate: step 2/2. In terms of biological role, catalyzes the NADPH-dependent reduction of L-glutamate 5-phosphate into L-glutamate 5-semialdehyde and phosphate. The product spontaneously undergoes cyclization to form 1-pyrroline-5-carboxylate. This chain is Gamma-glutamyl phosphate reductase, found in Salmonella paratyphi A (strain AKU_12601).